Consider the following 357-residue polypeptide: Probable RNA methyltransferase Daro_1157 (357 aa).

E91 serves as the catalytic Proton acceptor. Residues 94 to 320 (LLPRDGLCIS…TTVRNSAGQD (227 aa)) form the Radical SAM core domain. Residues C101 and C325 are joined by a disulfide bond. C108, C112, and C115 together coordinate [4Fe-4S] cluster. Residues 153–154 (GE), S183, 206–208 (SLH), and N282 each bind S-adenosyl-L-methionine. The S-methylcysteine intermediate role is filled by C325.

It belongs to the radical SAM superfamily. RlmN family. It depends on [4Fe-4S] cluster as a cofactor.

The protein resides in the cytoplasm. The chain is Probable RNA methyltransferase Daro_1157 from Dechloromonas aromatica (strain RCB).